A 184-amino-acid polypeptide reads, in one-letter code: ATP synthase subunit b, chloroplastic (184 aa).

A helical membrane pass occupies residues 27 to 49; the sequence is LATNPINLSVVLGVLIFFGKGVL.

Belongs to the ATPase B chain family. In terms of assembly, F-type ATPases have 2 components, F(1) - the catalytic core - and F(0) - the membrane proton channel. F(1) has five subunits: alpha(3), beta(3), gamma(1), delta(1), epsilon(1). F(0) has four main subunits: a(1), b(1), b'(1) and c(10-14). The alpha and beta chains form an alternating ring which encloses part of the gamma chain. F(1) is attached to F(0) by a central stalk formed by the gamma and epsilon chains, while a peripheral stalk is formed by the delta, b and b' chains.

The protein resides in the plastid. The protein localises to the chloroplast thylakoid membrane. F(1)F(0) ATP synthase produces ATP from ADP in the presence of a proton or sodium gradient. F-type ATPases consist of two structural domains, F(1) containing the extramembraneous catalytic core and F(0) containing the membrane proton channel, linked together by a central stalk and a peripheral stalk. During catalysis, ATP synthesis in the catalytic domain of F(1) is coupled via a rotary mechanism of the central stalk subunits to proton translocation. Its function is as follows. Component of the F(0) channel, it forms part of the peripheral stalk, linking F(1) to F(0). This is ATP synthase subunit b, chloroplastic from Pelargonium hortorum (Common geranium).